A 465-amino-acid chain; its full sequence is U4/U6 small nuclear ribonucleoprotein PRP4 (465 aa).

WD repeat units follow at residues 173 to 212, 216 to 256, 263 to 302, 305 to 344, 347 to 386, 391 to 432, and 435 to 464; these read VSTK…PLTQ, SHVG…GGLR, GHER…ELLL, GHDK…KVMT, GHSK…EGQL, AHRN…KMGS, and GHTD…IKLW.

As to quaternary structure, component of the U4/U6-U5 tri-snRNP complex composed of the U4, U6 and U5 snRNAs and at least PRP3, PRP4, PRP6, PRP8, PRP18, PRP31, PRP38, SNU13, SNU23, SNU66, SNU114, SPP381, SMB1, SMD1, SMD2, SMD3, SMX2, SMX3, LSM2, LSM3, LSM4, LSM5, LSM6, LSM7, LSM8, BRR2 and DIB1.

It is found in the nucleus. In terms of biological role, involved in RNA splicing. Is required for the association of U4/U6 snRNP with U5 snRNP in an early step of spliceosome assembly. This chain is U4/U6 small nuclear ribonucleoprotein PRP4 (PRP4), found in Saccharomyces cerevisiae (strain ATCC 204508 / S288c) (Baker's yeast).